The sequence spans 206 residues: Large ribosomal subunit protein uL4 (206 aa).

The interval 46–78 is disordered; that stretch reads GNRAQKDREQVKHTTKKPWRQKGTGRARAGMSS. Over residues 58–70 the composition is skewed to basic residues; sequence HTTKKPWRQKGTG.

This sequence belongs to the universal ribosomal protein uL4 family. In terms of assembly, part of the 50S ribosomal subunit.

Functionally, one of the primary rRNA binding proteins, this protein initially binds near the 5'-end of the 23S rRNA. It is important during the early stages of 50S assembly. It makes multiple contacts with different domains of the 23S rRNA in the assembled 50S subunit and ribosome. In terms of biological role, forms part of the polypeptide exit tunnel. The sequence is that of Large ribosomal subunit protein uL4 from Burkholderia lata (strain ATCC 17760 / DSM 23089 / LMG 22485 / NCIMB 9086 / R18194 / 383).